The sequence spans 395 residues: Bone morphogenetic protein 2 (395 aa).

The first 23 residues, 1–23 (MVAGTRCLLALLLPQVLLGGAAG), serve as a signal peptide directing secretion. The propeptide at 24-281 (LIPELGRRKF…GHPLHRREKR (258 aa)) is cleaved by PCSK5. Ser-86 is modified (phosphoserine). 2 N-linked (GlcNAc...) asparagine glycosylation sites follow: Asn-134 and Asn-199. The interval 270-292 (GKGHPLHRREKRQAKHKQRKRLK) is disordered. Over residues 273 to 292 (HPLHRREKRQAKHKQRKRLK) the composition is skewed to basic residues. 3 disulfides stabilise this stretch: Cys-295–Cys-360, Cys-324–Cys-392, and Cys-328–Cys-394. N-linked (GlcNAc...) asparagine glycosylation occurs at Asn-337.

This sequence belongs to the TGF-beta family. As to quaternary structure, homodimer; disulfide-linked. Interacts with SOSTDC1. Interacts with GREM2, RGMA, RGMB and RGMC. Interacts with ASPN. Interacts with MAFP5. Interacts with FBN1 (via N-terminal domain) and FBN2. Interacts with type I receptor BMPR1A. Interacts with type II receptor BMPR2. Interacts with SCUBE3. Interacts with TNFAIP6 (primarily via Link domain); this interaction is inhibited by hyaluronan. Interacts with ERFE. Interacts with BMPR1A/ALK3; the interaction may induce HAMP expression. Forms heterodimers with BMP6 in vitro; the heterodimer then binds to its receptor BMPR1A /ALK3 and may induce HAMP expression. Interacts with TGFBR3.

The protein resides in the secreted. Its function is as follows. Growth factor of the TGF-beta superfamily that plays essential roles in many developmental processes, including cardiogenesis, neurogenesis, and osteogenesis. Induces cartilage and bone formation. Initiates the canonical BMP signaling cascade by associating with type I receptor BMPR1A and type II receptor BMPR2. Once all three components are bound together in a complex at the cell surface, BMPR2 phosphorylates and activates BMPR1A. In turn, BMPR1A propagates signal by phosphorylating SMAD1/5/8 that travel to the nucleus and act as activators and repressors of transcription of target genes. Also acts to promote expression of HAMP, via the interaction with its receptor BMPR1A/ALK3. Can also signal through non-canonical pathways such as ERK/MAP kinase signaling cascade that regulates osteoblast differentiation. Also stimulates the differentiation of myoblasts into osteoblasts via the EIF2AK3-EIF2A-ATF4 pathway by stimulating EIF2A phosphorylation which leads to increased expression of ATF4 which plays a central role in osteoblast differentiation. Acts as a positive regulator of odontoblast differentiation during mesenchymal tooth germ formation, expression is repressed during the bell stage by MSX1-mediated inhibition of CTNNB1 signaling. The polypeptide is Bone morphogenetic protein 2 (BMP2) (Oryctolagus cuniculus (Rabbit)).